The following is a 1202-amino-acid chain: MNTKDTTEVAENSHHLKIFLPKKLLECLPRCPLLPPERLRWNTNEEIASYLITFEKHDEWLSCAPKTRPQNGSIILYNRKKVKYRKDGYLWKKRKDGKTTREDHMKLKVQGMECLYGCYVHSSIVPTFHRRCYWLLQNPDIVLVHYLNVPALEDCGKGCSPIFCSISSDRREWLKWSREELLGQLKPMFHGIKWSCGNGTEEFSVEHLVQQILDTHPTKPAPRTHACLCSGGLGSGSLTHKCSSTKHRIISPKVEPRALTLTSIPHAHPPEPPPLIAPLPPELPKAHTSPSSSSSSSSSGFAEPLEIRPSPPTSRGGSSRGGTAILLLTGLEQRAGGLTPTRHLAPQADPRPSMSLAVVVGTEPSAPPAPPSPAFDPDRFLNSPQRGQTYGGGQGVSPDFPEAEAAHTPCSALEPAAALEPQAAARGPPPQSVAGGRRGNCFFIQDDDSGEELKGHGAAPPIPSPPPSPPPSPAPLEPSSRVGRGEALFGGPVGASELEPFSLSSFPDLMGELISDEAPSIPAPTPQLSPALSTITDFSPEWSYPEGGVKVLITGPWTEAAEHYSCVFDHIAVPASLVQPGVLRCYCPAHEVGLVSLQVAGREGPLSASVLFEYRARRFLSLPSTQLDWLSLDDNQFRMSILERLEQMEKRMAEIAAAGQVPCQGPDAPPVQDEGQGPGFEARVVVLVESMIPRSTWKGPERLAHGSPFRGMSLLHLAAAQGYARLIETLSQWRSVETGSLDLEQEVDPLNVDHFSCTPLMWACALGHLEAAVLLFRWNRQALSIPDSLGRLPLSVAHSRGHVRLARCLEELQRQEPSVEPPFALSPPSSSPDTGLSSVSSPSELSDGTFSVTSAYSSAPDGSPPPAPLPASEMTMEDMAPGQLSSGVPEAPLLLMDYEATNSKGPLSSLPALPPASDDGAAPEDADSPQAVDVIPVDMISLAKQIIEATPERIKREDFVGLPEAGASMRERTGAVGLSETMSWLASYLENVDHFPSSTPPSELPFERGRLAVPSAPSWAEFLSASTSGKMESDFALLTLSDHEQRELYEAARVIQTAFRKYKGRRLKEQQEVAAAVIQRCYRKYKQLTWIALKFALYKKMTQAAILIQSKFRSYYEQKRFQQSRRAAVLIQQHYRSYRRRPGPPHRTSATLPARNKGSFLTKKQDQAARKIMRFLRRCRHRMRELKQNQELEGLPQPGLAT.

The segment at residues 30 to 155 is a DNA-binding region (CG-1); sequence RCPLLPPERL…YLNVPALEDC (126 aa). The Nuclear localization signal signature appears at 79–86; the sequence is RKKVKYRK. Disordered regions lie at residues 263–322, 361–409, and 421–491; these read SIPH…SRGG, GTEP…AHTP, and PQAA…LFGG. Positions 270–283 are enriched in pro residues; sequence PEPPPLIAPLPPEL. Low complexity-rich tracts occupy residues 289–299 and 313–322; these read SPSSSSSSSSS and TSRGGSSRGG. Composition is skewed to pro residues over residues 365–374 and 460–476; these read SAPPAPPSPA and PPIP…PAPL. In terms of domain architecture, IPT/TIG spans 537–615; sequence DFSPEWSYPE…LSASVLFEYR (79 aa). 3 ANK repeats span residues 712–745, 757–787, and 791–821; these read MSLL…DLEQ, CTPL…SIPD, and RLPL…SVEP. Disordered regions lie at residues 817–874 and 906–929; these read PSVE…ASEM and PLSS…ADSP. Composition is skewed to low complexity over residues 826 to 846 and 906 to 917; these read SPPS…SELS and PLSSLPALPPAS. 2 IQ domains span residues 1049–1078 and 1102–1131; these read YEAA…AAVI and TQAA…AVLI.

It belongs to the CAMTA family. May interact with calmodulin. In terms of tissue distribution, detected in brain. Expressed at constant levels throughout the cell cycle in neuroblastoma cell lines.

It localises to the nucleus. Its function is as follows. Transcription activator. May act as tumor suppressor. The sequence is that of Calmodulin-binding transcription activator 2 (CAMTA2) from Homo sapiens (Human).